Reading from the N-terminus, the 228-residue chain is L-ribulose-5-phosphate 4-epimerase UlaF (228 aa).

Residues 26–27 (GN), 43–44 (SG), and 72–73 (SS) each bind substrate. Zn(2+)-binding residues include D74, H93, and H95. Catalysis depends on D118, which acts as the Proton donor/acceptor. A Zn(2+)-binding site is contributed by H167. Y225 (proton donor/acceptor) is an active-site residue.

This sequence belongs to the aldolase class II family. AraD/FucA subfamily. It depends on Zn(2+) as a cofactor.

The catalysed reaction is L-ribulose 5-phosphate = D-xylulose 5-phosphate. It participates in cofactor degradation; L-ascorbate degradation; D-xylulose 5-phosphate from L-ascorbate: step 4/4. In terms of biological role, catalyzes the isomerization of L-ribulose 5-phosphate to D-xylulose 5-phosphate. Is involved in the anaerobic L-ascorbate utilization. This is L-ribulose-5-phosphate 4-epimerase UlaF from Shigella sonnei (strain Ss046).